The following is a 483-amino-acid chain: Glutarate-semialdehyde dehydrogenase (483 aa).

NADP(+) contacts are provided by residues 156 to 157, 180 to 183, and 233 to 234; these read WN, KPAS, and GS. The active-site Proton acceptor is the Glu-255. Leu-256 is a binding site for NADP(+). Residue Cys-289 is the Nucleophile of the active site. Position 386 (Glu-386) interacts with NADP(+).

Belongs to the aldehyde dehydrogenase family.

The enzyme catalyses 5-oxopentanoate + NADP(+) + H2O = glutarate + NADPH + 2 H(+). It participates in amino-acid degradation. Its function is as follows. Catalyzes the conversion of 5-oxopentanoate (glutarate semialdehyde) to glutarate. Involved in L-lysine degradation. This chain is Glutarate-semialdehyde dehydrogenase, found in Pseudomonas aeruginosa (strain ATCC 15692 / DSM 22644 / CIP 104116 / JCM 14847 / LMG 12228 / 1C / PRS 101 / PAO1).